Here is a 237-residue protein sequence, read N- to C-terminus: 4'-phosphopantetheinyl transferase HetI (237 aa).

Mg(2+) contacts are provided by D128, E130, and E174.

It belongs to the P-Pant transferase superfamily. Gsp/Sfp/HetI/AcpT family. Mg(2+) is required as a cofactor.

The catalysed reaction is apo-[peptidyl-carrier protein] + CoA = holo-[peptidyl-carrier protein] + adenosine 3',5'-bisphosphate + H(+). Probably activates the acyl carrier protein (ACP) domain of HetM, by transferring the 4'-phosphopantetheinyl moiety of coenzyme A (CoA) to a serine residue. May be required for maintaining vegetative growth and probably acts via HetN to inhibit differentiation. This chain is 4'-phosphopantetheinyl transferase HetI (hetI), found in Nostoc sp. (strain PCC 7120 / SAG 25.82 / UTEX 2576).